Reading from the N-terminus, the 198-residue chain is Recombination protein RecR (198 aa).

The C4-type zinc finger occupies 57 to 72 (CSICGNLTDQDPCAIC). The Toprim domain maps to 80 to 175 (STILIVEDSR…KVTRLARGLA (96 aa)).

The protein belongs to the RecR family.

In terms of biological role, may play a role in DNA repair. It seems to be involved in an RecBC-independent recombinational process of DNA repair. It may act with RecF and RecO. In Streptococcus suis (strain 05ZYH33), this protein is Recombination protein RecR.